The following is a 279-amino-acid chain: tRNA uridine(34) hydroxylase (279 aa).

The region spanning 126-221 (TKPGMHVIDT…YLQSVKGADS (96 aa)) is the Rhodanese domain. The active-site Cysteine persulfide intermediate is C181.

This sequence belongs to the TrhO family.

It catalyses the reaction uridine(34) in tRNA + AH2 + O2 = 5-hydroxyuridine(34) in tRNA + A + H2O. Its function is as follows. Catalyzes oxygen-dependent 5-hydroxyuridine (ho5U) modification at position 34 in tRNAs. This is tRNA uridine(34) hydroxylase from Anaplasma phagocytophilum (strain HZ).